We begin with the raw amino-acid sequence, 343 residues long: S-adenosylmethionine:tRNA ribosyltransferase-isomerase (343 aa).

It belongs to the QueA family. In terms of assembly, monomer.

It localises to the cytoplasm. It catalyses the reaction 7-aminomethyl-7-carbaguanosine(34) in tRNA + S-adenosyl-L-methionine = epoxyqueuosine(34) in tRNA + adenine + L-methionine + 2 H(+). The protein operates within tRNA modification; tRNA-queuosine biosynthesis. Its function is as follows. Transfers and isomerizes the ribose moiety from AdoMet to the 7-aminomethyl group of 7-deazaguanine (preQ1-tRNA) to give epoxyqueuosine (oQ-tRNA). This chain is S-adenosylmethionine:tRNA ribosyltransferase-isomerase, found in Geobacter metallireducens (strain ATCC 53774 / DSM 7210 / GS-15).